The primary structure comprises 153 residues: Large ribosomal subunit protein uL22 (153 aa).

Residues 125–153 form a disordered region; it reads EPKEARQARKKAKSGRPAAAAKSETEKGA.

It belongs to the universal ribosomal protein uL22 family. As to quaternary structure, part of the 50S ribosomal subunit.

Functionally, this protein binds specifically to 23S rRNA; its binding is stimulated by other ribosomal proteins, e.g. L4, L17, and L20. It is important during the early stages of 50S assembly. It makes multiple contacts with different domains of the 23S rRNA in the assembled 50S subunit and ribosome. In terms of biological role, the globular domain of the protein is located near the polypeptide exit tunnel on the outside of the subunit, while an extended beta-hairpin is found that lines the wall of the exit tunnel in the center of the 70S ribosome. This is Large ribosomal subunit protein uL22 from Cutibacterium acnes (strain DSM 16379 / KPA171202) (Propionibacterium acnes).